Reading from the N-terminus, the 551-residue chain is MASEQLSRRENITTERKIQNAEDSVPQRTTHFELRETHELGPNFQSLPRNENQAYLDRGARAPLSANVSESYLDRARVPLNANIPEHRVREKEDFGGVRDMGKFQMESKGGNKSLAEDRETLDTRSRMVTGTPHIKEASGKGQVVEERERARERAMEEEEKRLTMEEISKYRNQAQQSALEALSAAQEKYERAKQATNETLRNTTQAAQEKGEAAQAKDATFEKTQQGYEMTGDTVSNSARTASEKAAQAKNTTLGKTQQGYEATRDTVSNAARTAAEYATPAAEKARCVAVQAKDVTLETGKTAAEKAKCAAEIAAKVAVDLKEKATVAGWTASHYATQLTVDGTRAAANAVEGAVGYVAPKASELAAKSVETVKGLAASAGETAKEFTARKKEESWREYEAKRASQLQEGEEILPSTGGIGKVLPSGERTQAQGTNLQEKVQGKGSDILGAVTETVSDIGSSMIKPIDNANTKVKEHGGTTITPKGQDAGGVLDAIGETIAEIAHTTKVIVVGEDDEVEKSMQKNIGSDSHSLDRAKHEGYRAPKNNVS.

Over residues 1–20 (MASEQLSRRENITTERKIQN) the composition is skewed to basic and acidic residues. Residues 1-29 (MASEQLSRRENITTERKIQNAEDSVPQRT) are disordered. At Lys-103 the chain carries N6-biotinyllysine; atypical. Positions 141–211 (KGQVVEERER…RNTTQAAQEK (71 aa)) form a coiled coil. 2 disordered regions span residues 197–265 (TNET…YEAT) and 518–551 (DEVE…NNVS). The span at 206-219 (QAAQEKGEAAQAKD) shows a compositional bias: low complexity. 2 stretches are compositionally biased toward polar residues: residues 223 to 242 (EKTQ…SART) and 250 to 265 (AKNT…YEAT). A compositionally biased stretch (basic and acidic residues) spans 533–544 (HSLDRAKHEGYR).

The protein belongs to the seed biotin-containing protein SBP65 family. As to expression, expressed in dry mature seeds.

May serve as a biotin source for several growth-limiting enzymes that are necessary during seed development and the subsequent germination stages, and thus may play some roles in determining seed germination capacity. The chain is Seed biotin-containing protein SBP65 (SBP65) from Pisum sativum (Garden pea).